Here is a 279-residue protein sequence, read N- to C-terminus: Rhamnulose-1-phosphate aldolase (279 aa).

E115 is an active-site residue. H138, H140, and H209 together coordinate Zn(2+).

It belongs to the aldolase class II family. RhaD subfamily. Zn(2+) serves as cofactor.

The protein localises to the cytoplasm. The enzyme catalyses L-rhamnulose 1-phosphate = (S)-lactaldehyde + dihydroxyacetone phosphate. Its pathway is carbohydrate degradation; L-rhamnose degradation; glycerone phosphate from L-rhamnose: step 3/3. In terms of biological role, catalyzes the reversible cleavage of L-rhamnulose-1-phosphate to dihydroxyacetone phosphate (DHAP) and L-lactaldehyde. This is Rhamnulose-1-phosphate aldolase from Enterococcus faecalis (strain ATCC 700802 / V583).